A 112-amino-acid polypeptide reads, in one-letter code: UPF0342 protein SP_1372 (112 aa).

This sequence belongs to the UPF0342 family.

This chain is UPF0342 protein SP_1372, found in Streptococcus pneumoniae serotype 4 (strain ATCC BAA-334 / TIGR4).